Consider the following 58-residue polypeptide: Large ribosomal subunit protein uL30 (58 aa).

Belongs to the universal ribosomal protein uL30 family. Part of the 50S ribosomal subunit.

The protein is Large ribosomal subunit protein uL30 of Azotobacter vinelandii (strain DJ / ATCC BAA-1303).